The sequence spans 304 residues: MEPLIGMGVLALIGVAATIAGASEDLESDIGSQSNPNSQVQLAPQMMFPHRIFNKAISGEPPSNALMCSIGAAIATVLISEFTVSPLFALVFGSVIAASVHATFAVTATMGRCASQSRFKQPIYLDMIRSHTPAIMGYAFITTFCVLIVSYLMTVVLGHPFPLTMLAFIWGITIGAIGSSTGDVHYGAEREFQQFEFGSGLNASNSGNIVRYAESGLRNGFDNSWFCSKFGGPTTGIAFGMTVFLGSWITTIFDPAQGLSMGWLSVIAGVIIVLILIIWNWKIEVQARKAYGPYKEDKAEEASA.

6 helical membrane passes run 3–23 (PLIG…AGAS), 77–97 (VLIS…SVIA), 133–153 (PAIM…SYLM), 155–175 (VVLG…ITIG), 233–253 (PTTG…TTIF), and 259–279 (LSMG…LIIW).

Belongs to the MtrE family. The complex is composed of 8 subunits; MtrA, MtrB, MtrC, MtrD, MtrE, MtrF, MtrG and MtrH.

The protein resides in the cell membrane. The catalysed reaction is 5-methyl-5,6,7,8-tetrahydromethanopterin + coenzyme M + 2 Na(+)(in) = 5,6,7,8-tetrahydromethanopterin + methyl-coenzyme M + 2 Na(+)(out). Its pathway is one-carbon metabolism; methanogenesis from CO(2); methyl-coenzyme M from 5,10-methylene-5,6,7,8-tetrahydromethanopterin: step 2/2. Its function is as follows. Part of a complex that catalyzes the formation of methyl-coenzyme M and tetrahydromethanopterin from coenzyme M and methyl-tetrahydromethanopterin. This is an energy-conserving, sodium-ion translocating step. In Methanosarcina mazei (strain ATCC BAA-159 / DSM 3647 / Goe1 / Go1 / JCM 11833 / OCM 88) (Methanosarcina frisia), this protein is Tetrahydromethanopterin S-methyltransferase subunit E (mtrE).